The chain runs to 283 residues: Tetraspanin-33 (283 aa).

Over M1–Y24 the chain is Cytoplasmic. The chain crosses the membrane as a helical span at residues L25–V45. Over Y46–P64 the chain is Extracellular. A helical membrane pass occupies residues A65–G85. Residues S86–T96 are Cytoplasmic-facing. The chain crosses the membrane as a helical span at residues F97–V117. Over F118–N235 the chain is Extracellular. Intrachain disulfides connect C156–C224, C157–C189, C173–C183, and C190–C203. The N-linked (GlcNAc...) asparagine glycan is linked to N172. The helical transmembrane segment at L236–L256 threads the bilayer. The Cytoplasmic portion of the chain corresponds to S257–Y283.

Belongs to the tetraspanin (TM4SF) family. In terms of assembly, homodimer; disulfide-linked. Interacts (via extracellular domain) with ADAM10 (via extracellular domain). Interacts (via cytoplasmic domain) with PLEKHA7 (via WW domains); the interaction is dependent on PDZD11 being bound to PLEKHA7 and facilitates the docking of ADAM10 to zonula adherens. In terms of tissue distribution, predominantly expressed in erythroblasts.

The protein localises to the cell membrane. It localises to the cell junction. The protein resides in the adherens junction. It is found in the cytoplasm. Functionally, part of TspanC8 subgroup, composed of 6 members that interact with the transmembrane metalloprotease ADAM10. This interaction is required for ADAM10 exit from the endoplasmic reticulum and for enzymatic maturation and trafficking to the cell surface as well as substrate specificity. Different TspanC8/ADAM10 complexes have distinct substrates. Plays an important role in normal erythropoiesis. It has a role in the differentiation of erythroid progenitors. Negatively regulates ligand-induced Notch activity probably by regulating ADAM10 activity. Mediates docking of ADAM10 to zonula adherens by interacting with ADAM10 and, in a PDZD11-dependent manner, with the zonula adherens protein PLEKHA7. In Homo sapiens (Human), this protein is Tetraspanin-33.